A 578-amino-acid chain; its full sequence is Telomere repeat-binding protein 1 (578 aa).

One can recognise a Ubiquitin-like domain in the interval 293–372; the sequence is VKLRIKSFRV…HLDSLDFSLE (80 aa). Residues 440-467 form a disordered region; it reads ELSSQSQPPSRKSRRSEQQQQQAAQRRI. An HTH myb-type domain is found at 463–522; that stretch reads AQRRIRRPFSVAEVEALVQAVEKLGTGRWRDVKLCAFEDADHRTYVDLKDKWKTLVHTAK. Interaction with DNA regions lie at residues 465 to 469, 511 to 515, and 522 to 529; these read RRIRR, KDKWK, and KISPQQRR. A DNA-binding region (H-T-H motif) is located at residues 491–518; sequence WRDVKLCAFEDADHRTYVDLKDKWKTLV.

In terms of assembly, homodimer and heterodimer with TRP2 and TRP3. Interacts with KU70. In terms of tissue distribution, expressed ubiquitously. Highest expression in flowers and leaves.

It is found in the nucleus. Functionally, binds specifically to the plant telomeric double-stranded DNA sequences 5'-GGTTTAG-3'. At least 4 repeats of telomeric sequences are required for binding. Induces DNA bending. The chain is Telomere repeat-binding protein 1 (TRP1) from Arabidopsis thaliana (Mouse-ear cress).